Here is a 563-residue protein sequence, read N- to C-terminus: MDTKTLIASEIAKVVPELEQDAIFNLLETPKNSDMGDLAFPAFSLAKVLRKAPQMIASELAEQIDESQFEKVVAVGPYINFFLDKAKISSQVLEQVITAGSDYAQQDEGQGRNVAIDMSSPNIAKPFSIGHLRSTVIGDSLAHIFAKMGYKPVKINHLGDWGKQFGMLIVAYKKWGDETAVQAHPIDELLKLYVRINAEAETDPTVDEEAREWFRKLEDGDKEATELWQWFRDESLLEFNRLYDQLHVTFDSYNGEAFYNDKMDEVLDLLEAKNLLVESKGAQVVNLEKYGIEHPALIKKSDGATLYITRDLAAALYRKRTYDFAKSVYVVGNEQAAHFKQLKAVLKEMGYDWSDDMTHVAFGLVTKGGAKLSTRKGNVILLEPTVAEAINRAASQIEAKNPNLADKEAVAHAVGVGAIKFYDLKTDRMNGYDFDLEAMVSFEGETGPYVQYAHARIQSILRKADFTPSATTTYSLADAESWEIIKLIQDFPRIIKRTSDNFEPSIMAKFAINLAQSFNKYYAHTRILDDNSERDNRLALCYATATVLKEALRLLGVDAPNEM.

The 'HIGH' region signature appears at 121–131 (PNIAKPFSIGH).

This sequence belongs to the class-I aminoacyl-tRNA synthetase family. Monomer.

The protein localises to the cytoplasm. It carries out the reaction tRNA(Arg) + L-arginine + ATP = L-arginyl-tRNA(Arg) + AMP + diphosphate. This Streptococcus pyogenes serotype M6 (strain ATCC BAA-946 / MGAS10394) protein is Arginine--tRNA ligase.